Reading from the N-terminus, the 484-residue chain is Protein nucleotidyltransferase YdiU (484 aa).

Residues G81, G83, R84, K103, D115, G116, R166, and R173 each coordinate ATP. Residue D244 is the Proton acceptor of the active site. Positions 245 and 254 each coordinate Mg(2+). ATP is bound at residue D254.

Belongs to the SELO family. Mg(2+) is required as a cofactor. Requires Mn(2+) as cofactor.

The enzyme catalyses L-seryl-[protein] + ATP = 3-O-(5'-adenylyl)-L-seryl-[protein] + diphosphate. It catalyses the reaction L-threonyl-[protein] + ATP = 3-O-(5'-adenylyl)-L-threonyl-[protein] + diphosphate. The catalysed reaction is L-tyrosyl-[protein] + ATP = O-(5'-adenylyl)-L-tyrosyl-[protein] + diphosphate. It carries out the reaction L-histidyl-[protein] + UTP = N(tele)-(5'-uridylyl)-L-histidyl-[protein] + diphosphate. The enzyme catalyses L-seryl-[protein] + UTP = O-(5'-uridylyl)-L-seryl-[protein] + diphosphate. It catalyses the reaction L-tyrosyl-[protein] + UTP = O-(5'-uridylyl)-L-tyrosyl-[protein] + diphosphate. In terms of biological role, nucleotidyltransferase involved in the post-translational modification of proteins. It can catalyze the addition of adenosine monophosphate (AMP) or uridine monophosphate (UMP) to a protein, resulting in modifications known as AMPylation and UMPylation. The polypeptide is Protein nucleotidyltransferase YdiU (Shewanella loihica (strain ATCC BAA-1088 / PV-4)).